The sequence spans 694 residues: uncharacterized protein (694 aa).

Residues 15 to 51 are a coiled coil; that stretch reads HKEKMELLDQFDNERKEWESQWKIMQKKIEELCREVK. 3 disordered regions span residues 259-286, 461-490, and 643-680; these read LKRN…EQAY, QNHS…QSND, and NASH…RRTT. Polar residues-rich tracts occupy residues 272-283 and 476-490; these read STSRNFPSSDSE and DTSS…QSND. Residues 663–677 show a composition bias toward low complexity; sequence SRWASRSPSAPPALR.

This is an uncharacterized protein from Homo sapiens (Human).